Reading from the N-terminus, the 54-residue chain is Large ribosomal subunit protein bL32c (54 aa).

Residues 1–20 (MAVPKKKMSKSRRNSRKSNW) form a disordered region.

It belongs to the bacterial ribosomal protein bL32 family.

The protein resides in the plastid. Its subcellular location is the chloroplast. This is Large ribosomal subunit protein bL32c (rpl32) from Euglena gracilis.